The sequence spans 394 residues: Enoyl-CoA delta isomerase 2 (394 aa).

The transit peptide at 1–38 (MAMAYLAWRLARRSCPSSLQVTSFPVVQLHMNRTAMRA) directs the protein to the mitochondrion. In terms of domain architecture, ACB spans 39–124 (SQKDFENSMN…VSSLSPSLES (86 aa)). Residue Lys51 is modified to N6-acetyllysine; alternate. Lys51 is modified (N6-succinyllysine; alternate). Position 55 is an N6-succinyllysine (Lys55). At Lys62 the chain carries N6-acetyllysine; alternate. Lys62 carries the post-translational modification N6-succinyllysine; alternate. 66–70 (YALYK) contacts an acyl-CoA. Lys70, Lys81, and Lys90 each carry N6-succinyllysine. The residue at position 92 (Lys92) is an N6-acetyllysine; alternate. Lys92 carries the N6-succinyllysine; alternate modification. Residue Lys92 participates in an acyl-CoA binding. Residue Ser101 is modified to Phosphoserine. Tyr111 contacts an acyl-CoA. At Ser119 the chain carries Phosphoserine. The segment at 151–322 (TKIMFNRPKK…AQGLVTEVFP (172 aa)) is ECH-like. N6-succinyllysine is present on Lys161. Position 198–202 (198–202 (SGNDL)) interacts with substrate. Position 289 is an N6-succinyllysine (Lys289). The short motif at 392–394 (SKL) is the Microbody targeting signal element.

It in the C-terminal section; belongs to the enoyl-CoA hydratase/isomerase family. Abundant in heart, skeletal muscle and liver. Expressed in CD34(+) T-cells and CD34(+) bone marrow cells.

It is found in the mitochondrion. Its subcellular location is the peroxisome matrix. It catalyses the reaction a (3Z)-enoyl-CoA = a 4-saturated (2E)-enoyl-CoA. The catalysed reaction is (3Z)-octenoyl-CoA = (2E)-octenoyl-CoA. The enzyme catalyses a (3E)-enoyl-CoA = a 4-saturated (2E)-enoyl-CoA. It carries out the reaction (2E)-tetradecenoyl-CoA = (3Z)-tetradecenoyl-CoA. It catalyses the reaction (3E)-tetradecenoyl-CoA = (2E)-tetradecenoyl-CoA. The catalysed reaction is (3E)-octenoyl-CoA = (2E)-octenoyl-CoA. The enzyme catalyses (3E)-nonenoyl-CoA = (2E)-nonenoyl-CoA. It participates in lipid metabolism; fatty acid beta-oxidation. Its function is as follows. Able to isomerize both 3-cis and 3-trans double bonds into the 2-trans form in a range of enoyl-CoA species. Has a preference for 3-trans substrates. The chain is Enoyl-CoA delta isomerase 2 (ECI2) from Homo sapiens (Human).